The primary structure comprises 105 residues: BLOC-1-related complex subunit 7 (105 aa).

The protein belongs to the BORCS7 family. As to quaternary structure, component of the BLOC-one-related complex (BORC) which is composed of BLOC1S1, BLOC1S2, BORCS5, BORCS6, BORCS7, BORCS8, KXD1 and SNAPIN.

The protein resides in the lysosome membrane. In terms of biological role, as part of the BORC complex may play a role in lysosomes movement and localization at the cell periphery. Associated with the cytosolic face of lysosomes, the BORC complex may recruit ARL8B and couple lysosomes to microtubule plus-end-directed kinesin motor. This Bos taurus (Bovine) protein is BLOC-1-related complex subunit 7.